Reading from the N-terminus, the 441-residue chain is Double-stranded RNA-binding protein 1 (441 aa).

3 consecutive DRBM domains span residues 1–71 (MYKS…HLSS), 86–155 (SYKS…SLPQ), and 169–237 (SYKN…HFED). Residues 69–88 (LSSLPLPPPPPPSENQSSYK) form a disordered region.

In terms of biological role, binds double-stranded RNA. The chain is Double-stranded RNA-binding protein 1 (DRB1) from Oryza sativa subsp. japonica (Rice).